Reading from the N-terminus, the 146-residue chain is Hemoglobin subunit beta (146 aa).

The 145-residue stretch at 2–146 (HWTAEEKQLI…VAHALARKYH (145 aa)) folds into the Globin domain. Positions 63 and 92 each coordinate heme b.

It belongs to the globin family. As to quaternary structure, heterotetramer of two alpha chains and two beta chains. In terms of tissue distribution, red blood cells.

Involved in oxygen transport from the lung to the various peripheral tissues. In Anas platyrhynchos platyrhynchos (Northern mallard), this protein is Hemoglobin subunit beta (HBB).